The primary structure comprises 406 residues: Arginine decarboxylase (406 aa).

Residue Lys-8 is modified to N6-(pyridoxal phosphate)lysine. 192–202 (VDFGGGLGIDY) provides a ligand contact to substrate.

This sequence belongs to the Orn/Lys/Arg decarboxylase class-II family. SpeA subfamily. Pyridoxal 5'-phosphate is required as a cofactor. Requires Mg(2+) as cofactor.

The catalysed reaction is L-arginine + H(+) = agmatine + CO2. Its pathway is amine and polyamine biosynthesis; agmatine biosynthesis; agmatine from L-arginine: step 1/1. The chain is Arginine decarboxylase (SPE2) from Theobroma cacao (Cacao).